Reading from the N-terminus, the 256-residue chain is uncharacterized protein (256 aa).

Residues 1–23 (MKRLNKLVLGIIFLFLVISITAG) form the signal peptide. The N-palmitoyl cysteine moiety is linked to residue cysteine 24. The S-diacylglycerol cysteine moiety is linked to residue cysteine 24.

Belongs to the staphylococcal tandem lipoprotein family.

The protein localises to the cell membrane. This is an uncharacterized protein from Staphylococcus aureus (strain COL).